Reading from the N-terminus, the 521-residue chain is Acetylcholine receptor subunit beta-like 1 (521 aa).

Positions 1 to 24 (MESSCKSWLLCSILVLVAFSLVSA) are cleaved as a signal peptide. The Extracellular portion of the chain corresponds to 25-235 (SEDEERLVRD…ITFYIIIRRK (211 aa)). Residue Asn-48 is glycosylated (N-linked (GlcNAc...) asparagine). Cys-152 and Cys-166 are joined by a disulfide. Transmembrane regions (helical) follow at residues 236–260 (TLFYTVNLILPTVLISFLCVLVFYL), 268–286 (VTLGISILLSLVVFLLLVS), and 302–323 (YLLFTFIMNTVSILVTVIIINW). The Cytoplasmic segment spans residues 324–481 (NFRGPRTHRM…WKYVAMVIDR (158 aa)). Residues 482–500 (LQLYIFFIVTTAGTVGILM) traverse the membrane as a helical segment.

Belongs to the ligand-gated ion channel (TC 1.A.9) family. Acetylcholine receptor (TC 1.A.9.1) subfamily. As to expression, CNS in embryos.

The protein resides in the postsynaptic cell membrane. The protein localises to the cell membrane. Functionally, after binding acetylcholine, the AChR responds by an extensive change in conformation that affects all subunits and leads to opening of an ion-conducting channel across the plasma membrane. The sequence is that of Acetylcholine receptor subunit beta-like 1 (nAChRbeta1) from Drosophila melanogaster (Fruit fly).